The sequence spans 431 residues: Glucose-1-phosphate adenylyltransferase (431 aa).

Position 39 (Lys-39) interacts with beta-D-fructose 1,6-bisphosphate. Residues Arg-40, His-46, and Arg-52 each coordinate AMP. Tyr-114 contributes to the alpha-D-glucose 1-phosphate binding site. Arg-130 is an AMP binding site. Alpha-D-glucose 1-phosphate is bound by residues Gly-179, 194 to 195, and Ser-212; that span reads EK. Residues Glu-370 and Arg-386 each contribute to the AMP site. Beta-D-fructose 1,6-bisphosphate contacts are provided by residues 419 to 423 and 429 to 431; these read REMLR and QER.

Belongs to the bacterial/plant glucose-1-phosphate adenylyltransferase family. Homotetramer.

The enzyme catalyses alpha-D-glucose 1-phosphate + ATP + H(+) = ADP-alpha-D-glucose + diphosphate. The protein operates within glycan biosynthesis; glycogen biosynthesis. Allosterically activated by fructose-1,6-bisphosphate (F16BP) and inhibited by AMP. Its function is as follows. Involved in the biosynthesis of ADP-glucose, a building block required for the elongation reactions to produce glycogen. Catalyzes the reaction between ATP and alpha-D-glucose 1-phosphate (G1P) to produce pyrophosphate and ADP-Glc. The chain is Glucose-1-phosphate adenylyltransferase from Shigella dysenteriae serotype 1 (strain Sd197).